The following is a 545-amino-acid chain: Chromosomal replication initiator protein DnaA (545 aa).

Residues 1–72 (MNDFWQHCSA…DMARDFWQAP (72 aa)) are domain I, interacts with DnaA modulators. Positions 72 to 208 (PVDVQFVLDP…GETDSMYERS (137 aa)) are domain II. Residues 90–105 (AAAPAPASARPASAPG) are compositionally biased toward low complexity. Disordered stretches follow at residues 90 to 112 (AAAP…GSAG) and 181 to 204 (AAAR…TDSM). Positions 189-201 (PGQSASSNGNGET) are enriched in polar residues. The domain III, AAA+ region stretch occupies residues 209–425 (KLNPVLTFDN…GALRKILAYS (217 aa)). ATP-binding residues include G253, G255, K256, and T257. The tract at residues 426 to 545 (KFHGREITIE…LHVLEQTLKG (120 aa)) is domain IV, binds dsDNA.

The protein belongs to the DnaA family. As to quaternary structure, oligomerizes as a right-handed, spiral filament on DNA at oriC.

The protein localises to the cytoplasm. Its function is as follows. Plays an essential role in the initiation and regulation of chromosomal replication. ATP-DnaA binds to the origin of replication (oriC) to initiate formation of the DNA replication initiation complex once per cell cycle. Binds the DnaA box (a 9 base pair repeat at the origin) and separates the double-stranded (ds)DNA. Forms a right-handed helical filament on oriC DNA; dsDNA binds to the exterior of the filament while single-stranded (ss)DNA is stabiized in the filament's interior. The ATP-DnaA-oriC complex binds and stabilizes one strand of the AT-rich DNA unwinding element (DUE), permitting loading of DNA polymerase. After initiation quickly degrades to an ADP-DnaA complex that is not apt for DNA replication. Binds acidic phospholipids. The polypeptide is Chromosomal replication initiator protein DnaA (Paraburkholderia phytofirmans (strain DSM 17436 / LMG 22146 / PsJN) (Burkholderia phytofirmans)).